The following is a 172-amino-acid chain: Large ribosomal subunit protein uL10 (172 aa).

The protein belongs to the universal ribosomal protein uL10 family. In terms of assembly, part of the ribosomal stalk of the 50S ribosomal subunit. The N-terminus interacts with L11 and the large rRNA to form the base of the stalk. The C-terminus forms an elongated spine to which L12 dimers bind in a sequential fashion forming a multimeric L10(L12)X complex.

Its function is as follows. Forms part of the ribosomal stalk, playing a central role in the interaction of the ribosome with GTP-bound translation factors. The chain is Large ribosomal subunit protein uL10 from Caulobacter sp. (strain K31).